The primary structure comprises 120 residues: NAD(P)H-quinone oxidoreductase subunit 3 (120 aa).

The next 3 membrane-spanning stretches (helical) occupy residues 2 to 22 (FVLS…LVPI), 64 to 84 (MFAL…PWAV), and 89 to 109 (LGLL…IALV).

This sequence belongs to the complex I subunit 3 family. In terms of assembly, NDH-1 can be composed of about 15 different subunits; different subcomplexes with different compositions have been identified which probably have different functions.

It localises to the cellular thylakoid membrane. The catalysed reaction is a plastoquinone + NADH + (n+1) H(+)(in) = a plastoquinol + NAD(+) + n H(+)(out). It catalyses the reaction a plastoquinone + NADPH + (n+1) H(+)(in) = a plastoquinol + NADP(+) + n H(+)(out). Its function is as follows. NDH-1 shuttles electrons from an unknown electron donor, via FMN and iron-sulfur (Fe-S) centers, to quinones in the respiratory and/or the photosynthetic chain. The immediate electron acceptor for the enzyme in this species is believed to be plastoquinone. Couples the redox reaction to proton translocation, and thus conserves the redox energy in a proton gradient. Cyanobacterial NDH-1 also plays a role in inorganic carbon-concentration. This chain is NAD(P)H-quinone oxidoreductase subunit 3, found in Picosynechococcus sp. (strain ATCC 27264 / PCC 7002 / PR-6) (Agmenellum quadruplicatum).